A 135-amino-acid chain; its full sequence is Small ribosomal subunit protein eS24A (135 aa).

S2 carries the N-acetylserine modification. S14 carries the post-translational modification Phosphoserine. Residue K21 forms a Glycyl lysine isopeptide (Lys-Gly) (interchain with G-Cter in ubiquitin) linkage. At S56 the chain carries Phosphoserine. Residues 102–135 (KASRQQRKQKKNRDKKIFGTGKRLAKKVARRNAD) form a disordered region. Composition is skewed to basic residues over residues 105–115 (RQQRKQKKNRD) and 124–135 (RLAKKVARRNAD).

The protein belongs to the eukaryotic ribosomal protein eS24 family. Component of the small ribosomal subunit (SSU). Mature yeast ribosomes consist of a small (40S) and a large (60S) subunit. The 40S small subunit contains 1 molecule of ribosomal RNA (18S rRNA) and 33 different proteins (encoded by 57 genes). The large 60S subunit contains 3 rRNA molecules (25S, 5.8S and 5S rRNA) and 46 different proteins (encoded by 81 genes). Post-translationally, N-terminally acetylated by acetyltransferase NatA. Also partially acetylated by NatC.

The protein resides in the cytoplasm. In terms of biological role, component of the ribosome, a large ribonucleoprotein complex responsible for the synthesis of proteins in the cell. The small ribosomal subunit (SSU) binds messenger RNAs (mRNAs) and translates the encoded message by selecting cognate aminoacyl-transfer RNA (tRNA) molecules. The large subunit (LSU) contains the ribosomal catalytic site termed the peptidyl transferase center (PTC), which catalyzes the formation of peptide bonds, thereby polymerizing the amino acids delivered by tRNAs into a polypeptide chain. The nascent polypeptides leave the ribosome through a tunnel in the LSU and interact with protein factors that function in enzymatic processing, targeting, and the membrane insertion of nascent chains at the exit of the ribosomal tunnel. This Saccharomyces cerevisiae (strain ATCC 204508 / S288c) (Baker's yeast) protein is Small ribosomal subunit protein eS24A.